Consider the following 740-residue polypeptide: 1,4-alpha-glucan branching enzyme GlgB (740 aa).

Aspartate 419 serves as the catalytic Nucleophile. Glutamate 472 acts as the Proton donor in catalysis.

The protein belongs to the glycosyl hydrolase 13 family. GlgB subfamily. As to quaternary structure, monomer.

The catalysed reaction is Transfers a segment of a (1-&gt;4)-alpha-D-glucan chain to a primary hydroxy group in a similar glucan chain.. The protein operates within glycan biosynthesis; glycogen biosynthesis. Functionally, catalyzes the formation of the alpha-1,6-glucosidic linkages in glycogen by scission of a 1,4-alpha-linked oligosaccharide from growing alpha-1,4-glucan chains and the subsequent attachment of the oligosaccharide to the alpha-1,6 position. In Paramagnetospirillum magneticum (strain ATCC 700264 / AMB-1) (Magnetospirillum magneticum), this protein is 1,4-alpha-glucan branching enzyme GlgB.